Here is a 102-residue protein sequence, read N- to C-terminus: Large ribosomal subunit protein bL21 (102 aa).

Belongs to the bacterial ribosomal protein bL21 family. Part of the 50S ribosomal subunit. Contacts protein L20.

This protein binds to 23S rRNA in the presence of protein L20. The protein is Large ribosomal subunit protein bL21 of Pediococcus pentosaceus (strain ATCC 25745 / CCUG 21536 / LMG 10740 / 183-1w).